A 467-amino-acid chain; its full sequence is Venom serine carboxypeptidase (467 aa).

The N-terminal stretch at 1–18 (MKKLVLLQFLFFISFARG) is a signal peptide. Residues N130 and N169 are each glycosylated (N-linked (GlcNAc...) asparagine). S202 is a catalytic residue. Residues N304, N322, and N344 are each glycosylated (N-linked (GlcNAc...) asparagine). Catalysis depends on residues D387 and H444.

It belongs to the peptidase S10 family. Expressed by the venom duct.

The protein resides in the secreted. It carries out the reaction Release of a C-terminal amino acid with broad specificity.. This Apis mellifera (Honeybee) protein is Venom serine carboxypeptidase.